We begin with the raw amino-acid sequence, 75 residues long: Peptide Ctri10033 (75 aa).

Residues Met1–Gly22 form the signal peptide. At Arg43 the chain carries Arginine amide. Positions Glu47 to Tyr75 are excised as a propeptide.

The protein belongs to the non-disulfide-bridged peptide (NDBP) superfamily. Short antimicrobial peptide (group 4) family. As to expression, expressed by the venom gland.

It is found in the secreted. The polypeptide is Peptide Ctri10033 (Chaerilus tricostatus (Scorpion)).